We begin with the raw amino-acid sequence, 430 residues long: Tektin-2 (430 aa).

Coiled-coil stretches lie at residues 75–162 (KETL…FQHL) and 226–380 (KNRA…IACK).

The protein belongs to the tektin family. Microtubule inner protein component of sperm flagellar doublet microtubules. May interact with CCDC172. In terms of processing, ubiquitinated, leading to its degradation. Deubiquitinated by USP16, promoting its stability. Tyrosine phosphorylated. Expressed in the testes (at protein level).

The protein localises to the cytoplasm. It localises to the cytoskeleton. The protein resides in the cilium axoneme. It is found in the flagellum axoneme. Its subcellular location is the microtubule organizing center. Its function is as follows. Microtubule inner protein (MIP) part of the dynein-decorated doublet microtubules (DMTs) in cilia and flagellar axoneme. Plays a key role in the assembly or attachment of the inner dynein arm to microtubules in sperm flagella and tracheal cilia. Forms filamentous polymers in the walls of ciliary and flagellar microtubules. The chain is Tektin-2 (Tekt2) from Mus musculus (Mouse).